The sequence spans 162 residues: NADPH-dependent 7-cyano-7-deazaguanine reductase (162 aa).

C53 functions as the Thioimide intermediate in the catalytic mechanism. Residue D60 is the Proton donor of the active site. Substrate is bound by residues 75 to 77 (VES) and 94 to 95 (HE).

Belongs to the GTP cyclohydrolase I family. QueF type 1 subfamily.

The protein resides in the cytoplasm. It catalyses the reaction 7-aminomethyl-7-carbaguanine + 2 NADP(+) = 7-cyano-7-deazaguanine + 2 NADPH + 3 H(+). The protein operates within tRNA modification; tRNA-queuosine biosynthesis. Functionally, catalyzes the NADPH-dependent reduction of 7-cyano-7-deazaguanine (preQ0) to 7-aminomethyl-7-deazaguanine (preQ1). The sequence is that of NADPH-dependent 7-cyano-7-deazaguanine reductase from Streptococcus mutans serotype c (strain ATCC 700610 / UA159).